A 1823-amino-acid polypeptide reads, in one-letter code: Vitellogenin (1823 aa).

The N-terminal stretch at Met1–Ala14 is a signal peptide. Position 17 is a pyrrolidone carboxylic acid (Gln17). Residues Phe18–Val658 form the Vitellogenin domain. Residues Lys953–Ala986 form a disordered region. Residues Gln958 to Gln976 are compositionally biased toward low complexity. N-linked (GlcNAc...) asparagine glycosylation occurs at Asn1097. Positions Ser1119 to Leu1289 are disordered. Composition is skewed to low complexity over residues Pro1128–Asp1149 and Ser1178–Ser1192. Over residues Ser1194–Ala1206 the composition is skewed to basic residues. Composition is skewed to low complexity over residues Ser1217–Ser1238 and Ser1253–Ser1286. N-linked (GlcNAc...) asparagine glycosylation is present at Asn1298. The disordered stretch occupies residues Val1308–Ser1351. The span at Ser1323 to Asp1344 shows a compositional bias: low complexity. The VWFD domain occupies Ser1564–Gly1732. Disulfide bonds link Cys1566-Cys1695 and Cys1589-Cys1731. Asn1675 carries an N-linked (GlcNAc...) asparagine glycan.

In terms of processing, what corresponds to phosvitin in other species is lost during maturation of vitellogenin to lipovitellin. In terms of tissue distribution, produced by the liver, secreted into the blood and then sequestered by receptor mediated endocytosis into growing oocytes, where it is generally cleaved, giving rise to the respective yolk components lipovitellins 1 and 2.

Functionally, precursor of the major egg-yolk proteins that are sources of nutrients during early development of oviparous organisms. The protein is Vitellogenin of Ichthyomyzon unicuspis (Silver lamprey).